The sequence spans 284 residues: MLIIETLPLLRQQIRRWRQEGKRVALVPTMGNLHEGHMTLVEDAKTRADVVVVSIFVNPLQFERPDDLARYPRTLQEDCEKLTRHGVDLVFAPAAADVYPAGLEAQTYVDVPALSTILEGASRPGHFRGVSTIVSKLFNLVQPDVACFGEKDYQQLALIRKMVADMGYDINIVGVPIVRAKDGLALSSRNGYLSAQERKIAPQLYKIMQALAEKLALGERQIDDLLADTAEQLRDAGFTPDELFIRDAQSLQPLTVDSKQAIILMAAWLGKARLIDNQQVDLHS.

Residue 30–37 (MGNLHEGH) participates in ATP binding. The Proton donor role is filled by H37. (R)-pantoate is bound at residue Q61. Beta-alanine is bound at residue Q61. 149 to 152 (GEKD) contributes to the ATP binding site. Q155 serves as a coordination point for (R)-pantoate. Residues V178 and 186–189 (LSSR) contribute to the ATP site.

Belongs to the pantothenate synthetase family. In terms of assembly, homodimer.

The protein resides in the cytoplasm. The catalysed reaction is (R)-pantoate + beta-alanine + ATP = (R)-pantothenate + AMP + diphosphate + H(+). Its pathway is cofactor biosynthesis; (R)-pantothenate biosynthesis; (R)-pantothenate from (R)-pantoate and beta-alanine: step 1/1. Catalyzes the condensation of pantoate with beta-alanine in an ATP-dependent reaction via a pantoyl-adenylate intermediate. The chain is Pantothenate synthetase from Yersinia enterocolitica serotype O:8 / biotype 1B (strain NCTC 13174 / 8081).